We begin with the raw amino-acid sequence, 94 residues long: Co-chaperonin GroES (94 aa).

It belongs to the GroES chaperonin family. In terms of assembly, heptamer of 7 subunits arranged in a ring. Interacts with the chaperonin GroEL.

The protein localises to the cytoplasm. In terms of biological role, together with the chaperonin GroEL, plays an essential role in assisting protein folding. The GroEL-GroES system forms a nano-cage that allows encapsulation of the non-native substrate proteins and provides a physical environment optimized to promote and accelerate protein folding. GroES binds to the apical surface of the GroEL ring, thereby capping the opening of the GroEL channel. The protein is Co-chaperonin GroES of Finegoldia magna (strain ATCC 29328 / DSM 20472 / WAL 2508) (Peptostreptococcus magnus).